Reading from the N-terminus, the 469-residue chain is Reticulon-2 (469 aa).

Disordered stretches follow at residues 1-180 and 201-238; these read MGQV…EASE and LTPQ…NGEG. Residues 14–25 show a composition bias toward low complexity; sequence APSTASSTPDST. Positions 32-43 are enriched in basic and acidic residues; the sequence is SDFRELHTAREF. Ser-44 carries the post-translational modification Phosphoserine. A compositionally biased stretch (basic and acidic residues) spans 135-144; sequence RPLEELRLRL. 2 stretches are compositionally biased toward polar residues: residues 159-168 and 203-226; these read DSATSSSTPL and PQLS…QDLN. Positions 270-469 constitute a Reticulon domain; the sequence is VADLLYWKDT…SVSGSKAKAE (200 aa). A run of 2 helical transmembrane segments spans residues 293 to 313 and 388 to 408; these read LLCL…LLGL and LLFY…LVIL.

In terms of assembly, interacts with SPAST. Interacts with BACE1. Interacts (via first transmembrane domain) with ARL6IP5/GTRAP3-18. Interacts (via N-terminus) with SLC1A1/EAAC1; the interaction promotes cell surface expression of SLC1A1. As to expression, expressed in brain and spinal cord (at protein level). In the embryonic brain cortex, expressed in neurons but not in astrocytes (at protein level).

The protein localises to the endoplasmic reticulum membrane. The protein resides in the sarcoplasmic reticulum membrane. It is found in the cell membrane. It localises to the sarcolemma. Its subcellular location is the T-tubule. The protein localises to the cytoplasm. The protein resides in the myofibril. It is found in the sarcomere. It localises to the z line. Its subcellular location is the cytoskeleton. Functionally, inhibits amyloid precursor protein processing, probably by blocking BACE1 activity. Enhances trafficking of the glutamate transporter SLC1A1/EAAC1 from the endoplasmic reticulum to the cell surface. Plays a role in the translocation of SLC2A4/GLUT4 from intracellular membranes to the cell membrane which facilitates the uptake of glucose into the cell. The chain is Reticulon-2 from Rattus norvegicus (Rat).